The following is a 407-amino-acid chain: Snake venom metalloproteinase ACLH (407 aa).

The N-terminal stretch at 1–20 is a signal peptide; the sequence is MIQVLLVTLCLAAFPYQGSS. Positions 21 to 187 are excised as a propeptide; the sequence is IILESGNVND…PIKKASQLNL (167 aa). One can recognise a Peptidase M12B domain in the interval 193–389; sequence RYVELVTVVD…ENPQCILNKP (197 aa). The Ca(2+) site is built by glutamate 196 and aspartate 280. 3 disulfides stabilise this stretch: cysteine 304/cysteine 384, cysteine 344/cysteine 368, and cysteine 346/cysteine 351. Residue histidine 329 participates in Zn(2+) binding. The active site involves glutamate 330. Residues histidine 333 and histidine 339 each contribute to the Zn(2+) site. Asparagine 367 is a glycosylation site (N-linked (GlcNAc...) asparagine). Ca(2+)-binding residues include cysteine 384 and asparagine 387.

It belongs to the venom metalloproteinase (M12B) family. P-I subfamily. As to quaternary structure, monomer. Zn(2+) is required as a cofactor. Post-translationally, contains sialic acid terminally alpha(2-6)-linked to galactose in a complex N-glycan chain. As to expression, expressed by the venom gland.

Its subcellular location is the secreted. In terms of biological role, this zinc hemorrhagic metalloproteinase has fibrino(geno)lytic activities. It causes hemorrhage and has myonecrotic activity on both fiber types I and II. The recombinant enzyme, without post-translational modifications, also has proteolytic activity, but does not show any hemorrhagic activity. In Agkistrodon contortrix laticinctus (Broad-banded copperhead), this protein is Snake venom metalloproteinase ACLH.